The chain runs to 264 residues: Undecaprenyl-diphosphatase (264 aa).

Transmembrane regions (helical) follow at residues Leu-34–Ile-54, Leu-75–Ile-95, Tyr-104–Ile-124, Leu-137–Val-157, Tyr-180–Ser-200, Val-207–Gly-227, and Ile-243–Leu-263.

The protein belongs to the UppP family.

The protein localises to the cell membrane. It carries out the reaction di-trans,octa-cis-undecaprenyl diphosphate + H2O = di-trans,octa-cis-undecaprenyl phosphate + phosphate + H(+). In terms of biological role, catalyzes the dephosphorylation of undecaprenyl diphosphate (UPP). The polypeptide is Undecaprenyl-diphosphatase (Sulfurisphaera tokodaii (strain DSM 16993 / JCM 10545 / NBRC 100140 / 7) (Sulfolobus tokodaii)).